The chain runs to 95 residues: Cell division protein FtsB (95 aa).

Residues 1 to 3 (MKW) are Cytoplasmic-facing. The chain crosses the membrane as a helical span at residues 4-21 (VTGLLVVLLLGLQYKLWI). Topologically, residues 22–95 (GEGSVAEVWQ…QVVGRPGETP (74 aa)) are periplasmic. The stretch at 26-73 (VAEVWQLRQTLEAQRAENEELRYRNAALDAEVTDLKTGLDAIEERARR) forms a coiled coil.

The protein belongs to the FtsB family. Part of a complex composed of FtsB, FtsL and FtsQ.

It localises to the cell inner membrane. In terms of biological role, essential cell division protein. May link together the upstream cell division proteins, which are predominantly cytoplasmic, with the downstream cell division proteins, which are predominantly periplasmic. This chain is Cell division protein FtsB, found in Thioalkalivibrio sulfidiphilus (strain HL-EbGR7).